Here is a 1527-residue protein sequence, read N- to C-terminus: DNA (cytosine-5)-methyltransferase 1A (1527 aa).

2 disordered regions span residues 1-62 and 661-718; these read MAKS…PKRA and GDTK…KEIK. Acidic residues-rich tracts occupy residues 25 to 36 and 664 to 692; these read EPVENENLESEF and KEEDQNEPKEIDDDQEENEDNDAEEEVNV. The segment covering 709–718 has biased composition (basic and acidic residues); sequence SSADTRKEIK. BAH domains are found at residues 742 to 874 and 910 to 1049; these read LSIS…FSLP and ITYN…KQLP. An SAM-dependent MTase C5-type domain is found at 1092–1526; that stretch reads LATLDIFAGC…RKLKQAIDAK (435 aa). Cys1197 is an active-site residue.

The protein belongs to the class I-like SAM-binding methyltransferase superfamily. C5-methyltransferase family. As to expression, expressed in roots and inflorescences. Expressed in roots, panicles, anthers, pistils, endosperm and imbibed embryos. Expressed in tissues containing actively replicating and dividing cells, such as shoot and root meristems.

The protein resides in the nucleus. The catalysed reaction is a 2'-deoxycytidine in DNA + S-adenosyl-L-methionine = a 5-methyl-2'-deoxycytidine in DNA + S-adenosyl-L-homocysteine + H(+). In terms of biological role, probably methylates CpG residues and maintains DNA methylation. May be involved in methylation-dependent gene silencing. May play a minor role in the maintenance of DNA methylation. The protein is DNA (cytosine-5)-methyltransferase 1A of Oryza sativa subsp. japonica (Rice).